A 639-amino-acid polypeptide reads, in one-letter code: MSQDNEYGAGQIQVLEGLEAVRKRPAMYIGSTDSRGLHHLVYEVVDNSIDEALAGHCDAIEVALHEDGSVSVTDNGRGIPVDTHEQYDRPALEVIMTVLHAGGKFDNKSYQVSGGLHGVGVSVVNALSSELEVEVKRDGAVWTHRFEVGEPQVEEFERVRDLEPGEDTGTTIRFWPDDGIFETTEFDFKTLENRLRELAFLNSGVEISLSDERTDESSTFLFEGGIREFVEYLNETKTALHDDVIYYDDESEGIEVEIAMQATDELQGSIHAFANNINTREGGTHLTGFKTALTRVVNDYANSHDMLDDLDGDNLRGEDVREGLTAVISVKHPDPQFEGQTKTKLGNSEVRGIVESVTHQQLGTFFEENPDTATAIISKAVEAARARKAAKQAEELTRRKSALESTSLPGKLADCQSRDPSESELFIVEGDSAGGSAKQGRDRKFQAILPLKGKILNVEKHRLDRILENDEIRALITAIGGGVGDEFDIEKARYQRLILMTDADVDGAHIRTLLLTLLYRHMRPLIEAGYVYAAQPPLYRVRYRGNTYDAMDEAERDRIIEEECNGNPTQVQRFKGLGEMNPDQLWDTTMNPENRVLKRITVEDAAAADRMFNILMGDAVGPRKQFIKDHANDAEWVDI.

Positions 392–402 (QAEELTRRKSA) are enriched in basic and acidic residues. The tract at residues 392–417 (QAEELTRRKSALESTSLPGKLADCQS) is disordered. The Toprim domain occupies 423–537 (SELFIVEGDS…AGYVYAAQPP (115 aa)). The Mg(2+) site is built by glutamate 429, aspartate 502, and aspartate 504.

The protein belongs to the type II topoisomerase GyrB family. In terms of assembly, heterotetramer, composed of two GyrA and two GyrB chains. In the heterotetramer, GyrA contains the active site tyrosine that forms a transient covalent intermediate with DNA, while GyrB binds cofactors and catalyzes ATP hydrolysis. Mg(2+) is required as a cofactor. It depends on Mn(2+) as a cofactor. The cofactor is Ca(2+).

The protein resides in the cytoplasm. The catalysed reaction is ATP-dependent breakage, passage and rejoining of double-stranded DNA.. Its function is as follows. A type II topoisomerase that negatively supercoils closed circular double-stranded (ds) DNA in an ATP-dependent manner to modulate DNA topology and maintain chromosomes in an underwound state. Negative supercoiling favors strand separation, and DNA replication, transcription, recombination and repair, all of which involve strand separation. Also able to catalyze the interconversion of other topological isomers of dsDNA rings, including catenanes and knotted rings. Type II topoisomerases break and join 2 DNA strands simultaneously in an ATP-dependent manner. The sequence is that of DNA gyrase subunit B from Haloferax lucentense (strain DSM 14919 / JCM 9276 / NCIMB 13854 / Aa 2.2) (Haloferax alicantei).